The sequence spans 157 residues: Siroheme decarboxylase NirG subunit (157 aa).

The protein belongs to the Ahb/Nir family. As to quaternary structure, forms a complex composed of NirDL, NirG and NirH. All proteins are required for the total conversion of siroheme to didecarboxysiroheme.

The enzyme catalyses siroheme + 2 H(+) = 12,18-didecarboxysiroheme + 2 CO2. It functions in the pathway porphyrin-containing compound metabolism. In terms of biological role, involved in heme d1 biosynthesis. Catalyzes the decarboxylation of siroheme into didecarboxysiroheme. Siroheme is probably decarboxylated to monodecarboxysiroheme, which is in turn decarboxylated to didecarboxysiroheme. The chain is Siroheme decarboxylase NirG subunit from Paracoccus pantotrophus (Thiosphaera pantotropha).